The primary structure comprises 444 residues: Orexin receptor type 2 (444 aa).

Residues methionine 1–proline 10 are compositionally biased toward basic and acidic residues. The interval methionine 1–glutamate 20 is disordered. Residues methionine 1 to glutamate 54 lie on the Extracellular side of the membrane. 2 N-linked (GlcNAc...) asparagine glycosylation sites follow: asparagine 14 and asparagine 22. The required for response to orexin-A stretch occupies residues aspartate 33–histidine 49. Residues tryptophan 55–valine 75 form a helical membrane-spanning segment. The Cytoplasmic portion of the chain corresponds to cysteine 76–valine 88. The chain crosses the membrane as a helical span at residues threonine 89–alanine 110. The Extracellular segment spans residues threonine 111–cysteine 127. An intrachain disulfide couples cysteine 127 to cysteine 210. Residues lysine 128–leucine 150 traverse the membrane as a helical segment. At aspartate 151 to arginine 170 the chain is on the cytoplasmic side. Residues asparagine 171–methionine 191 form a helical membrane-spanning segment. Topologically, residues glutamate 192–methionine 222 are extracellular. N-linked (GlcNAc...) asparagine glycosylation is present at asparagine 202. The helical transmembrane segment at tyrosine 223–tyrosine 243 threads the bilayer. Over leucine 244–arginine 304 the chain is Cytoplasmic. The chain crosses the membrane as a helical span at residues methionine 305–leucine 326. Asparagine 324 provides a ligand contact to suvorexant. Topologically, residues lysine 327–valine 342 are extracellular. Residues tyrosine 343–phenylalanine 366 form a helical membrane-spanning segment. The Cytoplasmic portion of the chain corresponds to leucine 367–tryptophan 444.

Belongs to the G-protein coupled receptor 1 family.

The protein localises to the cell membrane. Its function is as follows. Nonselective, high-affinity receptor for both orexin-A and orexin-B neuropeptides. Triggers an increase in cytoplasmic Ca(2+) levels in response to orexin-A binding. In Homo sapiens (Human), this protein is Orexin receptor type 2 (HCRTR2).